Here is a 556-residue protein sequence, read N- to C-terminus: 5-aminolevulinate synthase, mitochondrial (556 aa).

A mitochondrion-targeting transit peptide spans 1 to 46 (MDSLARQSAKICPFVSRVTSSMQQVQVLHKTNMSAMAQQCPVMRRA). Residues Arg105, Ser218, and Lys237 each coordinate substrate. Pyridoxal 5'-phosphate contacts are provided by Ser270, His298, and Thr342. Lys345 is an active-site residue. An N6-(pyridoxal phosphate)lysine modification is found at Lys345. Residues Thr374 and Ser375 each coordinate pyridoxal 5'-phosphate. A substrate-binding site is contributed by Thr460.

Belongs to the class-II pyridoxal-phosphate-dependent aminotransferase family. In terms of assembly, homodimer. The cofactor is pyridoxal 5'-phosphate.

The protein resides in the mitochondrion matrix. The catalysed reaction is succinyl-CoA + glycine + H(+) = 5-aminolevulinate + CO2 + CoA. It participates in porphyrin-containing compound metabolism; protoporphyrin-IX biosynthesis; 5-aminolevulinate from glycine: step 1/1. Catalyzes the synthesis of 5-aminolevulinate (ALA) from succinyl-CoA and glycine, the first and rate-limiting step in heme biosynthesis. The sequence is that of 5-aminolevulinate synthase, mitochondrial (HEM1) from Eremothecium gossypii (strain ATCC 10895 / CBS 109.51 / FGSC 9923 / NRRL Y-1056) (Yeast).